The chain runs to 374 residues: Lipoyl synthase, mitochondrial (374 aa).

Residues Cys-101, Cys-106, Cys-112, Cys-132, Cys-136, Cys-139, and Ser-347 each coordinate [4Fe-4S] cluster. One can recognise a Radical SAM core domain in the interval 117–336 (ENGTQTATIM…EERGNDLGFL (220 aa)).

The protein belongs to the radical SAM superfamily. Lipoyl synthase family. [4Fe-4S] cluster is required as a cofactor.

The protein resides in the mitochondrion. It catalyses the reaction [[Fe-S] cluster scaffold protein carrying a second [4Fe-4S](2+) cluster] + N(6)-octanoyl-L-lysyl-[protein] + 2 oxidized [2Fe-2S]-[ferredoxin] + 2 S-adenosyl-L-methionine + 4 H(+) = [[Fe-S] cluster scaffold protein] + N(6)-[(R)-dihydrolipoyl]-L-lysyl-[protein] + 4 Fe(3+) + 2 hydrogen sulfide + 2 5'-deoxyadenosine + 2 L-methionine + 2 reduced [2Fe-2S]-[ferredoxin]. It participates in protein modification; protein lipoylation via endogenous pathway; protein N(6)-(lipoyl)lysine from octanoyl-[acyl-carrier-protein]: step 2/2. Its function is as follows. Catalyzes the radical-mediated insertion of two sulfur atoms into the C-6 and C-8 positions of the octanoyl moiety bound to the lipoyl domains of lipoate-dependent enzymes, thereby converting the octanoylated domains into lipoylated derivatives. In Drosophila pseudoobscura pseudoobscura (Fruit fly), this protein is Lipoyl synthase, mitochondrial.